The sequence spans 171 residues: Adenine phosphoribosyltransferase (171 aa).

It belongs to the purine/pyrimidine phosphoribosyltransferase family. In terms of assembly, homodimer.

It localises to the cytoplasm. It carries out the reaction AMP + diphosphate = 5-phospho-alpha-D-ribose 1-diphosphate + adenine. The protein operates within purine metabolism; AMP biosynthesis via salvage pathway; AMP from adenine: step 1/1. In terms of biological role, catalyzes a salvage reaction resulting in the formation of AMP, that is energically less costly than de novo synthesis. The sequence is that of Adenine phosphoribosyltransferase (apt) from Prochlorococcus marinus subsp. pastoris (strain CCMP1986 / NIES-2087 / MED4).